We begin with the raw amino-acid sequence, 122 residues long: Large ribosomal subunit protein uL14 (122 aa).

Belongs to the universal ribosomal protein uL14 family. As to quaternary structure, part of the 50S ribosomal subunit. Forms a cluster with proteins L3 and L19. In the 70S ribosome, L14 and L19 interact and together make contacts with the 16S rRNA in bridges B5 and B8.

In terms of biological role, binds to 23S rRNA. Forms part of two intersubunit bridges in the 70S ribosome. This chain is Large ribosomal subunit protein uL14, found in Chelativorans sp. (strain BNC1).